The chain runs to 305 residues: Small ribosomal subunit biogenesis GTPase RsgA (305 aa).

Residues 67-224 (SSELVRPAVA…VADTPGFSSF (158 aa)) enclose the CP-type G domain. GTP is bound by residues 116–119 (NKID) and 166–174 (GQSGVGKST). Positions 248, 253, 255, and 261 each coordinate Zn(2+).

The protein belongs to the TRAFAC class YlqF/YawG GTPase family. RsgA subfamily. As to quaternary structure, monomer. Associates with 30S ribosomal subunit, binds 16S rRNA. Zn(2+) serves as cofactor.

It is found in the cytoplasm. In terms of biological role, one of several proteins that assist in the late maturation steps of the functional core of the 30S ribosomal subunit. Helps release RbfA from mature subunits. May play a role in the assembly of ribosomal proteins into the subunit. Circularly permuted GTPase that catalyzes slow GTP hydrolysis, GTPase activity is stimulated by the 30S ribosomal subunit. The protein is Small ribosomal subunit biogenesis GTPase RsgA of Ruminiclostridium cellulolyticum (strain ATCC 35319 / DSM 5812 / JCM 6584 / H10) (Clostridium cellulolyticum).